The following is a 366-amino-acid chain: UDP-N-acetylglucosamine--N-acetylmuramyl-(pentapeptide) pyrophosphoryl-undecaprenol N-acetylglucosamine transferase (366 aa).

UDP-N-acetyl-alpha-D-glucosamine-binding positions include T10–G12, N124, R165, S192, I247, and Q292.

It belongs to the glycosyltransferase 28 family. MurG subfamily.

Its subcellular location is the cell inner membrane. It catalyses the reaction di-trans,octa-cis-undecaprenyl diphospho-N-acetyl-alpha-D-muramoyl-L-alanyl-D-glutamyl-meso-2,6-diaminopimeloyl-D-alanyl-D-alanine + UDP-N-acetyl-alpha-D-glucosamine = di-trans,octa-cis-undecaprenyl diphospho-[N-acetyl-alpha-D-glucosaminyl-(1-&gt;4)]-N-acetyl-alpha-D-muramoyl-L-alanyl-D-glutamyl-meso-2,6-diaminopimeloyl-D-alanyl-D-alanine + UDP + H(+). It participates in cell wall biogenesis; peptidoglycan biosynthesis. In terms of biological role, cell wall formation. Catalyzes the transfer of a GlcNAc subunit on undecaprenyl-pyrophosphoryl-MurNAc-pentapeptide (lipid intermediate I) to form undecaprenyl-pyrophosphoryl-MurNAc-(pentapeptide)GlcNAc (lipid intermediate II). This Geotalea daltonii (strain DSM 22248 / JCM 15807 / FRC-32) (Geobacter daltonii) protein is UDP-N-acetylglucosamine--N-acetylmuramyl-(pentapeptide) pyrophosphoryl-undecaprenol N-acetylglucosamine transferase.